A 70-amino-acid chain; its full sequence is Protein SlyX homolog (70 aa).

The protein belongs to the SlyX family.

The protein is Protein SlyX homolog of Shewanella baltica (strain OS155 / ATCC BAA-1091).